Here is a 340-residue protein sequence, read N- to C-terminus: Short-chain dehydrogenase/reductase prx1 (340 aa).

NADP(+)-binding residues include I60, K84, D104, N131, and K162. S184 functions as the Proton donor in the catalytic mechanism. NADP(+) is bound by residues Y210 and K214. Residue Y210 is the Proton acceptor of the active site. Catalysis depends on K214, which acts as the Lowers pKa of active site Tyr.

The protein belongs to the short-chain dehydrogenases/reductases (SDR) family.

It participates in sesquiterpene biosynthesis. In terms of biological role, short-chain dehydrogenase/reductase; part of the gene cluster that mediates the biosynthesis of PR-toxin, a bicyclic sesquiterpene belonging to the eremophilane class and acting as a mycotoxin. The first step of the pathway is catalyzed by the aristolochene synthase which performs the cyclization of trans,trans-farnesyl diphosphate (FPP) to the bicyclic sesquiterpene aristolochene. Following the formation of aristolochene, the non-oxygenated aristolochene is converted to the trioxygenated intermediate eremofortin B, via 7-epi-neopetasone. This conversion appears to involve three enzymes, a hydroxysterol oxidase-like enzyme, the quinone-oxidase prx3 that forms the quinone-type-structure in the bicyclic nucleus of aristolochene with the C8-oxo group and the C-3 hydroxyl group, and the P450 monooxygenase prx9 that introduces the epoxide at the double bond between carbons 1 and 2. No monoxy or dioxy-intermediates have been reported to be released to the broth, so these three early oxidative reactions may be coupled together. Eremofortin B is further oxidized by another P450 monooxygenase, that introduces a second epoxide between carbons 7 and 11 prior to acetylation to eremofortin A by the acetyltransferase prx11. The second epoxidation may be performed by a second P450 monooxygenase. After the acetylation step, eremofortin A is converted to eremofortin C and then to PR-toxin. First the conversion of eremofortin A to eremofortin C proceeds by oxidation of the side chain of the molecule at C-12 and is catalyzed by the short-chain oxidoreductase prx1. The cytochrome P450 monooxygenase prx8 also plays a role in this step. The primary alcohol formed at C-12 is finally oxidized by the short-chain alcohol dehydrogenase prx4 that forms PR-toxin. The protein is Short-chain dehydrogenase/reductase prx1 of Penicillium rubens (strain ATCC 28089 / DSM 1075 / NRRL 1951 / Wisconsin 54-1255) (Penicillium chrysogenum).